Reading from the N-terminus, the 250-residue chain is NAD-dependent protein deacylase 1 (250 aa).

The region spanning 1-250 (MRAVVELLAG…PELLRRAFPG (250 aa)) is the Deacetylase sirtuin-type domain. 19–39 (GAGVSAESGIPTFRDALGGLW) serves as a coordination point for NAD(+). Substrate is bound by residues Tyr-64 and Arg-67. Residue 98 to 101 (QNVD) participates in NAD(+) binding. His-116 acts as the Proton acceptor in catalysis. Residues Cys-124, Cys-127, Cys-152, and Cys-155 each coordinate Zn(2+). NAD(+) is bound by residues 192–194 (GTS), 218–220 (NPQ), and Ala-236.

The protein belongs to the sirtuin family. Class III subfamily. The cofactor is Zn(2+).

Its subcellular location is the cytoplasm. The catalysed reaction is N(6)-acetyl-L-lysyl-[protein] + NAD(+) + H2O = 2''-O-acetyl-ADP-D-ribose + nicotinamide + L-lysyl-[protein]. The enzyme catalyses N(6)-succinyl-L-lysyl-[protein] + NAD(+) + H2O = 2''-O-succinyl-ADP-D-ribose + nicotinamide + L-lysyl-[protein]. NAD-dependent lysine deacetylase and desuccinylase that specifically removes acetyl and succinyl groups on target proteins. Modulates the activities of several proteins which are inactive in their acylated form. This is NAD-dependent protein deacylase 1 from Pseudomonas aeruginosa (strain ATCC 15692 / DSM 22644 / CIP 104116 / JCM 14847 / LMG 12228 / 1C / PRS 101 / PAO1).